A 264-amino-acid chain; its full sequence is MEVFKALFKSKEAYTVDVDPMKDSDEHDLPRDPLSIRVTGEEEVNHIPYPYFDEIPTEEEMKKKSAEFYKSMKKRRTVRKISSEPVPLEVIENIVRVAGTSPSGAHTEPWTYVVIRDPDLKKQIKEVVEEEEQLNYARRMGEKWVQDLSILKTTWSKPYIETAPYLILIFKQVYGIKPDGDKKVHYYNEISVCISCGLLLAAIQNAGLVTVTSTPMNAGPRLRVLLNRPQNEKLIMLLPVGYPAKDAEVPNLTRKPLEEIMVLK.

FMN-binding positions include 75-79 (RRTVR) and 103-104 (SG). Positions 105, 132, 136, and 157 each coordinate 3-iodo-L-tyrosine. Residues 212–214 (TST) and R254 contribute to the FMN site.

The protein belongs to the nitroreductase family. Requires FMN as cofactor.

The catalysed reaction is 2 iodide + L-tyrosine + 2 NADP(+) = 3,5-diiodo-L-tyrosine + 2 NADPH + H(+). The enzyme catalyses iodide + L-tyrosine + NADP(+) = 3-iodo-L-tyrosine + NADPH. It catalyses the reaction 3-iodo-L-tyrosine + iodide + NADP(+) = 3,5-diiodo-L-tyrosine + NADPH + H(+). It carries out the reaction L-tyrosine + chloride + NADP(+) = 3-chloro-L-tyrosine + NADPH. The catalysed reaction is bromide + L-tyrosine + NADP(+) = 3-bromo-L-tyrosine + NADPH. Catalyzes the dehalogenation of halotyrosines such as 3,5-diiodo-L-tyrosine. Likely to also catalyze the dehalogenation of other halotyrosines such as 3-bromo-L-tyrosine, 3-chloro-L-tyrosine and 3-iodo-L-tyrosine. The sequence is that of Iodotyrosine deiodinase from Nematostella vectensis (Starlet sea anemone).